The following is a 623-amino-acid chain: MTLNKKTNNENSSKTTPKLSKKTDFQNDFASKNYVFNPQDKVFQIAQVFGITSAVLIKKLLQLGLKADVNQTLEKDIVELLAKEYNIKVIEPQKEQTPPQLQPQKPPLTKSKLQAKPNQKLNLQKTPPIVTIMGHVDHGKTTLLDAIRKTRVVDQEFGGITQHIGAYQVEYQGNKITFIDTPGHEAFDKMRARGAKITDICILVVAVDDCVKPQTLEALKHAQKAQIPIIVALNKVDKPNNKTQQIMQELSSYDLLPEEWGGTTPYIAISALKREGLEKILEIILLFSEIQNLQTNPDQKAKGTVIEASLDKSLGPVATFIISDGNLKVGDIVVAGTSYGKIRSMEDENKKTPTKALPSQPVRVSGLKEVPQAGDIFYAVSNEKQARQIVSEKKTKTKETLAKPPSPLNLEDILQDLETEKPQELNIILKADTQGSLEALQGMIDKIKVSDLKVQLLRAAVGTITEKDIAFAKSSDSLLIGFNIKPAFSTLKSAQIQEVKITIHNVIYRIIEDIEQKLKSMIKPTFEEVVTGKVEVRKIFNISKVGNIAGCYVTQGIVNNSDFAKVMRNDEVLFKGKITSLKHLKDNIKSAKQGHECGILLDGFNDFEINDIIETSKLSKVEE.

Residues 1–18 show a composition bias toward low complexity; that stretch reads MTLNKKTNNENSSKTTPK. Disordered regions lie at residues 1-21 and 92-115; these read MTLNKKTNNENSSKTTPKLSK and PQKEQTPPQLQPQKPPLTKSKLQA. The tr-type G domain occupies 125–293; the sequence is KTPPIVTIMG…ILLFSEIQNL (169 aa). The segment at 134 to 141 is G1; sequence GHVDHGKT. Residue 134-141 coordinates GTP; the sequence is GHVDHGKT. Positions 159 to 163 are G2; it reads GITQH. The interval 180–183 is G3; the sequence is DTPG. Residues 180-184 and 234-237 contribute to the GTP site; these read DTPGH and NKVD. A G4 region spans residues 234 to 237; sequence NKVD. Residues 270–272 are G5; sequence SAL.

The protein belongs to the TRAFAC class translation factor GTPase superfamily. Classic translation factor GTPase family. IF-2 subfamily.

Its subcellular location is the cytoplasm. Its function is as follows. One of the essential components for the initiation of protein synthesis. Protects formylmethionyl-tRNA from spontaneous hydrolysis and promotes its binding to the 30S ribosomal subunits. Also involved in the hydrolysis of GTP during the formation of the 70S ribosomal complex. This is Translation initiation factor IF-2 from Aster yellows witches'-broom phytoplasma (strain AYWB).